The following is a 117-amino-acid chain: Eukaryotic translation initiation factor 4E-binding protein 1 (117 aa).

Composition is skewed to polar residues over residues 1-12 (MSAGSSCSQTPS) and 33-47 (YSTTPGGTLFSTTPG). Residues 1–47 (MSAGSSCSQTPSRAIPTRRVALGDGVQLPPGDYSTTPGGTLFSTTPG) form a disordered region. The residue at position 2 (serine 2) is an N-acetylserine. Phosphothreonine is present on residues threonine 36 and threonine 40. At serine 43 the chain carries Phosphoserine. A phosphothreonine mark is found at threonine 45 and threonine 49. Tyrosine 53 carries the post-translational modification Phosphotyrosine. The short motif at 53–59 (YDRKFLM) is the YXXXXLphi motif element. A Glycyl lysine isopeptide (Lys-Gly) (interchain with G-Cter in ubiquitin) cross-link involves residue lysine 56. Residue serine 64 is modified to Phosphoserine. Residues 64 to 117 (SPVAKTPPKDLPAIPGVTSPTSDEPPMQASQSQLPSSPEDKRAGGEESQFEMDI) are disordered. The residue at position 69 (threonine 69) is a Phosphothreonine. Residues 81–99 (TSPTSDEPPMQASQSQLPS) show a composition bias toward polar residues. Residues serine 82, serine 95, serine 99, serine 100, and serine 111 each carry the phosphoserine modification. Positions 113–117 (FEMDI) match the TOS motif motif.

The protein belongs to the eIF4E-binding protein family. As to quaternary structure, hypophosphorylated EIF4EBP1 competes with EIF4G1/EIF4G3 to interact with EIF4E; insulin stimulated MAP-kinase (MAPK1 and MAPK3) or mTORC1 phosphorylation of EIF4EBP1 causes dissociation of the complex allowing EIF4G1/EIF4G3 to bind and consequent initiation of translation. Interacts (via TOS motif) with RPTOR; promoting phosphorylation by mTORC1. Post-translationally, phosphorylated on serine and threonine residues in response to insulin, EGF and PDGF. Phosphorylation at Thr-36, Thr-45, Ser-64 and Thr-69, corresponding to the hyperphosphorylated form, is regulated by mTORC1 and abolishes binding to EIF4E. Ubiquitinated: when eIF4E levels are low, hypophosphorylated form is ubiquitinated by the BCR(KLHL25) complex, leading to its degradation and serving as a homeostatic mechanism to maintain translation and prevent eIF4E inhibition when eIF4E levels are low. Not ubiquitinated when hyperphosphorylated (at Thr-36, Thr-45, Ser-64 and Thr-69) or associated with eIF4E. In terms of tissue distribution, highest expression in fat cells.

The protein resides in the cytoplasm. Its subcellular location is the nucleus. In terms of biological role, repressor of translation initiation that regulates EIF4E activity by preventing its assembly into the eIF4F complex: hypophosphorylated form competes with EIF4G1/EIF4G3 and strongly binds to EIF4E, leading to repress translation. In contrast, hyperphosphorylated form dissociates from EIF4E, allowing interaction between EIF4G1/EIF4G3 and EIF4E, leading to initiation of translation. Mediates the regulation of protein translation by hormones, growth factors and other stimuli that signal through the MAP kinase and mTORC1 pathways. This Mus musculus (Mouse) protein is Eukaryotic translation initiation factor 4E-binding protein 1 (Eif4ebp1).